Reading from the N-terminus, the 124-residue chain is Small ribosomal subunit protein uS12 (124 aa).

A disordered region spans residues 1–32 (MPTIQQLVRKGRQAKTTKTKTPALKGSPQRRG). Over residues 9-18 (RKGRQAKTTK) the composition is skewed to basic residues. Asp-89 carries the post-translational modification 3-methylthioaspartic acid. The interval 105 to 124 (QGVRNRKQARSRYGAKKEKS) is disordered. Residues 108-118 (RNRKQARSRYG) show a composition bias toward basic residues.

It belongs to the universal ribosomal protein uS12 family. Part of the 30S ribosomal subunit. Contacts proteins S8 and S17. May interact with IF1 in the 30S initiation complex.

In terms of biological role, with S4 and S5 plays an important role in translational accuracy. Functionally, interacts with and stabilizes bases of the 16S rRNA that are involved in tRNA selection in the A site and with the mRNA backbone. Located at the interface of the 30S and 50S subunits, it traverses the body of the 30S subunit contacting proteins on the other side and probably holding the rRNA structure together. The combined cluster of proteins S8, S12 and S17 appears to hold together the shoulder and platform of the 30S subunit. This is Small ribosomal subunit protein uS12 from Salinispora arenicola (strain CNS-205).